Here is a 523-residue protein sequence, read N- to C-terminus: 3-hydroxybenzoate--CoA/4-hydroxybenzoate--CoA ligase (523 aa).

Belongs to the ATP-dependent AMP-binding enzyme family. Benzoate-CoA ligase subfamily.

The enzyme catalyses 4-hydroxybenzoate + ATP + CoA = 4-hydroxybenzoyl-CoA + AMP + diphosphate. It carries out the reaction 3-hydroxybenzoate + ATP + CoA = 3-hydroxybenzoyl-CoA + AMP + diphosphate. In terms of biological role, catalyzes the ligation of 3-hydroxybenzoate or 4-hydroxybenzoate and CoA at the expense of ATP. The enzyme shows low activity towards benzoate, 4-aminobenzoate, 3-aminobenzoate, 3-fluorobenzoate, 4-fluorobenzoate, 3-chlorobenzoate, and 4-chlorobenzoate. There is no activity with 3,4-dihydroxybenzoate, 2,3-dihydroxybenzoate, and 2-hydroxybenzoate as substrates. In Thauera aromatica, this protein is 3-hydroxybenzoate--CoA/4-hydroxybenzoate--CoA ligase (hcl).